Consider the following 366-residue polypeptide: UPF0329 protein ECU01_0130/ECU01_1480/ECU08_0060 (366 aa).

Positions 325 to 366 (IRKEEKRIRKEEERAKNEEELLRMVESEEGKSGEGEEGCRRG) are disordered.

This sequence belongs to the UPF0329 family.

The chain is UPF0329 protein ECU01_0130/ECU01_1480/ECU08_0060 from Encephalitozoon cuniculi (strain GB-M1) (Microsporidian parasite).